The following is a 502-amino-acid chain: ATP synthase subunit alpha (502 aa).

The segment at 119–139 (GPIATTKSRPIESPAPGVMDR) is disordered. Residue 169–176 (GDRQTGKT) coordinates ATP.

This sequence belongs to the ATPase alpha/beta chains family. As to quaternary structure, F-type ATPases have 2 components, CF(1) - the catalytic core - and CF(0) - the membrane proton channel. CF(1) has five subunits: alpha(3), beta(3), gamma(1), delta(1), epsilon(1). CF(0) has three main subunits: a(1), b(2) and c(9-12). The alpha and beta chains form an alternating ring which encloses part of the gamma chain. CF(1) is attached to CF(0) by a central stalk formed by the gamma and epsilon chains, while a peripheral stalk is formed by the delta and b chains.

The protein localises to the cell membrane. It catalyses the reaction ATP + H2O + 4 H(+)(in) = ADP + phosphate + 5 H(+)(out). Functionally, produces ATP from ADP in the presence of a proton gradient across the membrane. The alpha chain is a regulatory subunit. The protein is ATP synthase subunit alpha of Alkalihalophilus pseudofirmus (strain ATCC BAA-2126 / JCM 17055 / OF4) (Bacillus pseudofirmus).